A 639-amino-acid polypeptide reads, in one-letter code: E3 ubiquitin-protein ligase RNF12 (639 aa).

3 disordered regions span residues 1 to 28 (MESA…RLDR), 67 to 403 (RLQQ…ESER), and 467 to 534 (NDTD…GGVT). Over residues 11–21 (STEQSESQRQS) the composition is skewed to low complexity. 2 stretches are compositionally biased toward polar residues: residues 110-138 (SVRQ…NPNS) and 147-166 (INVN…QSSE). Residues 213 to 228 (RSPDQRRTRARTDRSR) show a composition bias toward basic and acidic residues. A compositionally biased stretch (polar residues) spans 244–253 (HSSSQTVDAS). Low complexity predominate over residues 269 to 286 (SSQMQNSSSSNETEGSSR). Residues 290-302 (HITARQQALGTEG) are compositionally biased toward polar residues. Low complexity-rich tracts occupy residues 303–327 (QSQS…SQST) and 335–348 (SRSS…DSSS). Over residues 349 to 358 (NAETTGTGQR) the composition is skewed to polar residues. Residues 372 to 382 (RPGDYRQRDSI) are compositionally biased toward basic and acidic residues. Over residues 383–399 (ANRTRSRSQTPNNTVTY) the composition is skewed to polar residues. 2 stretches are compositionally biased toward pro residues: residues 473–482 (NPTPVSPPAA) and 493–506 (PEPP…PEPV). The RING-type; atypical zinc-finger motif lies at 585–626 (CSVCITEYTEGNKLRKLPCSHEYHVHCIDRWLSENSTCPICR). Residues 636–639 (ESIV) carry the PDZ-binding motif.

Belongs to the RNF12 family. As to quaternary structure, forms homodimers through the C-terminal region. The N-terminus interacts with the homeobox of LIM/homeobox factor lhx1/lim1, with lhx3/lim3 and lhx5/lim5, and with the N-terminus of ldb1.

It is found in the nucleus. The enzyme catalyses S-ubiquitinyl-[E2 ubiquitin-conjugating enzyme]-L-cysteine + [acceptor protein]-L-lysine = [E2 ubiquitin-conjugating enzyme]-L-cysteine + N(6)-ubiquitinyl-[acceptor protein]-L-lysine.. It participates in protein modification; protein ubiquitination. Its function is as follows. Acts as an E3 ubiquitin-protein ligase specific for ldb1, mediating ubiquitination and proteasome-dependent degradation of excess ldb1 in a RING-dependent manner. Does not degrade ldb1 bound to lhx1/lim1, nor lim1 itself and thus contributes to the establishment of proper ldb1-lhx1/lim1 stoichiometry and the formation of a ldb1-lhx1/lim1 complex. Interferes with Spemann organizer function and suppresses secondary axis formation induced by ldb1 and lhx1/lim1. This chain is E3 ubiquitin-protein ligase RNF12, found in Xenopus tropicalis (Western clawed frog).